Consider the following 265-residue polypeptide: 3-methyl-2-oxobutanoate hydroxymethyltransferase (265 aa).

Mg(2+) contacts are provided by Asp45 and Asp84. 3-methyl-2-oxobutanoate is bound by residues 45 to 46 (DS), Asp84, and Lys112. Residue Glu114 participates in Mg(2+) binding. Glu181 functions as the Proton acceptor in the catalytic mechanism.

Belongs to the PanB family. In terms of assembly, homodecamer; pentamer of dimers. Requires Mg(2+) as cofactor.

Its subcellular location is the cytoplasm. It catalyses the reaction 3-methyl-2-oxobutanoate + (6R)-5,10-methylene-5,6,7,8-tetrahydrofolate + H2O = 2-dehydropantoate + (6S)-5,6,7,8-tetrahydrofolate. The protein operates within cofactor biosynthesis; (R)-pantothenate biosynthesis; (R)-pantoate from 3-methyl-2-oxobutanoate: step 1/2. Functionally, catalyzes the reversible reaction in which hydroxymethyl group from 5,10-methylenetetrahydrofolate is transferred onto alpha-ketoisovalerate to form ketopantoate. The polypeptide is 3-methyl-2-oxobutanoate hydroxymethyltransferase (Pseudoalteromonas atlantica (strain T6c / ATCC BAA-1087)).